Consider the following 613-residue polypeptide: Ethylene response sensor 1 (613 aa).

3 consecutive transmembrane segments (helical) span residues 23–43 (ISDALIALAYFSIPLELIYFV), 58–78 (FGAFIILCGATHFINLWMFFM), and 95–115 (AVVSCATALMLVHIIPDLLSV). Residues Cys-65 and His-69 each contribute to the Cu cation site. Positions 158–307 (DRHTILRTTL…NVADQVAVAL (150 aa)) constitute a GAF domain. Positions 350 to 589 (VMNHEMRTPM…SFIIRLGICN (240 aa)) constitute a Histidine kinase domain. The residue at position 353 (His-353) is a Phosphohistidine; by autocatalysis.

Belongs to the ethylene receptor family. In terms of assembly, homodimer; disulfide-linked. Heteromer with ETR1. It depends on Cu cation as a cofactor. In terms of processing, autophosphorylated on both His and Ser residues in the presence of manganese. Loss of His autophosphorylation in the presence of both manganese and magnesium. As to expression, expressed in etiolated seedlings, leaves, stems, roots, flowers, embryos, anthers, carpels and ovules.

The protein localises to the endoplasmic reticulum membrane. The catalysed reaction is ATP + protein L-histidine = ADP + protein N-phospho-L-histidine.. Functionally, ethylene receptor related to bacterial two-component regulators. Acts as a redundant negative regulator of ethylene signaling. In Arabidopsis thaliana (Mouse-ear cress), this protein is Ethylene response sensor 1 (ERS1).